Consider the following 256-residue polypeptide: Calsenilin (256 aa).

The interval methionine 1–isoleucine 22 is disordered. At serine 14 the chain carries Phosphoserine. Lysine 26 participates in a covalent cross-link: Glycyl lysine isopeptide (Lys-Gly) (interchain with G-Cter in SUMO1). S-palmitoyl cysteine attachment occurs at residues cysteine 45 and cysteine 46. A phosphoserine mark is found at serine 60 and serine 63. Residues leucine 67–proline 123 enclose the EF-hand 1; degenerate domain. Residue lysine 90 forms a Glycyl lysine isopeptide (Lys-Gly) (interchain with G-Cter in SUMO1) linkage. 3 EF-hand domains span residues aspartate 126 to glycine 161, threonine 162 to methionine 197, and alanine 210 to isoleucine 245. Residues aspartate 175, asparagine 177, aspartate 179, tyrosine 181, glutamate 186, aspartate 223, asparagine 225, aspartate 227, and glutamate 234 each coordinate Ca(2+). Residues glutamate 243–isoleucine 256 are interaction with KCND2.

The protein belongs to the recoverin family. Binds to DNA as a homomultimer. Dimerization is induced by binding to calcium. Interacts with the C-terminus of PSEN1 and PSEN2 and with PSEN2 CTF subunit. Associates with KCN1. Component of heteromultimeric potassium channels. Identified in potassium channel complexes containing KCND1, KCND2, KCND3, KCNIP1, KCNIP2, KCNIP3, KCNIP4, DPP6 and DPP10. Interacts with KCND2 and KCND3. In terms of processing, palmitoylated. Palmitoylation enhances association with the plasma membrane. Post-translationally, proteolytically cleaved by caspase-3. In terms of tissue distribution, detected in brain cortex, thalamus, dentate gyrus and cerebellum (at protein level). Expressed in brain. Colocalizes with KCND2 in excitatory neurons including cortical and hippocampal CA1 pyramidal cells.

It localises to the cytoplasm. The protein resides in the cell membrane. The protein localises to the endoplasmic reticulum. Its subcellular location is the golgi apparatus. It is found in the nucleus. In terms of biological role, calcium-dependent transcriptional repressor that binds to the DRE element of genes including PDYN and FOS. Affinity for DNA is reduced upon binding to calcium and enhanced by binding to magnesium. Seems to be involved in nociception. Its function is as follows. Regulatory subunit of Kv4/D (Shal)-type voltage-gated rapidly inactivating A-type potassium channels, such as KCND2/Kv4.2 and KCND3/Kv4.3. Modulates channel expression at the cell membrane, gating characteristics, inactivation kinetics and rate of recovery from inactivation in a calcium-dependent and isoform-specific manner. May play a role in the regulation of PSEN2 proteolytic processing and apoptosis. Together with PSEN2 involved in modulation of amyloid-beta formation. This is Calsenilin (Kcnip3) from Rattus norvegicus (Rat).